Consider the following 540-residue polypeptide: Phosphomethylpyrimidine synthase (540 aa).

Residues N143, M172, Y201, H237, 257–259 (SRG), 298–301 (DGLR), and E337 contribute to the substrate site. H341 is a binding site for Zn(2+). Y364 is a substrate binding site. H405 contacts Zn(2+). [4Fe-4S] cluster-binding residues include C485, C488, and C493.

It belongs to the ThiC family. The cofactor is [4Fe-4S] cluster.

The enzyme catalyses 5-amino-1-(5-phospho-beta-D-ribosyl)imidazole + S-adenosyl-L-methionine = 4-amino-2-methyl-5-(phosphooxymethyl)pyrimidine + CO + 5'-deoxyadenosine + formate + L-methionine + 3 H(+). The protein operates within cofactor biosynthesis; thiamine diphosphate biosynthesis. Catalyzes the synthesis of the hydroxymethylpyrimidine phosphate (HMP-P) moiety of thiamine from aminoimidazole ribotide (AIR) in a radical S-adenosyl-L-methionine (SAM)-dependent reaction. The protein is Phosphomethylpyrimidine synthase of Mycobacterium avium (strain 104).